A 162-amino-acid chain; its full sequence is Interleukin-15 (162 aa).

Positions 1-29 (MRISKPSLRSTSIQCYLCFLLNSHLITEA) are cleaved as a signal peptide. Positions 30-48 (GIHVFVWGCISAGLPKTEA) are excised as a propeptide. 2 disulfides stabilise this stretch: Cys-83/Cys-133 and Cys-90/Cys-136. Residues Asn-119 and Asn-127 are each glycosylated (N-linked (GlcNAc...) asparagine).

The protein belongs to the IL-15/IL-21 family.

It localises to the secreted. Its function is as follows. Cytokine that plays a major role in the development of inflammatory and protective immune responses to microbial invaders and parasites by modulating immune cells of both the innate and adaptive immune systems. Stimulates the proliferation of natural killer cells, T-cells and B-cells and promotes the secretion of several cytokines. In monocytes, induces the production of IL8 and monocyte chemotactic protein 1/CCL2, two chemokines that attract neutrophils and monocytes respectively to sites of infection. Unlike most cytokines, which are secreted in soluble form, IL15 is expressed in association with its high affinity IL15RA on the surface of IL15-producing cells and delivers signals to target cells that express IL2RB and IL2RG receptor subunits. Binding to its receptor triggers the phosphorylation of JAK1 and JAK3 and the recruitment and subsequent phosphorylation of signal transducer and activator of transcription-3/STAT3 and STAT5. In mast cells, induces the rapid tyrosine phosphorylation of STAT6 and thereby controls mast cell survival and release of cytokines such as IL4. The sequence is that of Interleukin-15 (IL15) from Cavia porcellus (Guinea pig).